The following is a 507-amino-acid chain: Sulfatase (507 aa).

An N-terminal signal peptide occupies residues 1–18 (MKTRYFLLLGICMLSCRT). Residues aspartate 39, aspartate 40, and cysteine 79 each contribute to the Ca(2+) site. Residue cysteine 79 is the Nucleophile of the active site. The residue at position 79 (cysteine 79) is a 3-oxoalanine (Cys). Histidine 139 is a catalytic residue. Aspartate 325 and histidine 326 together coordinate Ca(2+).

This sequence belongs to the sulfatase family. Ca(2+) serves as cofactor. The conversion to 3-oxoalanine (also known as C-formylglycine, FGly), of a serine or cysteine residue in prokaryotes and of a cysteine residue in eukaryotes, is critical for catalytic activity. This post-translational modification is severely defective in multiple sulfatase deficiency (MSD).

Its subcellular location is the periplasm. Its function is as follows. Sulfatase that may be involved in ulvan degradation. Ulvan is the main polysaccharide component of the Ulvales (green seaweed) cell wall. It is composed of disaccharide building blocks comprising 3-sulfated rhamnose (Rha3S) linked to D-glucuronic acid (GlcA), L-iduronic acid (IduA), or D-xylose (Xyl). Has no activity on different ulvan polymers. The chain is Sulfatase from Formosa agariphila (strain DSM 15362 / KCTC 12365 / LMG 23005 / KMM 3901 / M-2Alg 35-1).